A 360-amino-acid polypeptide reads, in one-letter code: Spore germination protein GerQB (360 aa).

A run of 10 helical transmembrane segments spans residues 11–31 (SPYM…MLGF), 45–65 (ISTL…YQIL), 84–104 (IGGL…ATTL), 116–136 (FPSI…YYIV), 142–162 (VVAG…FTFF), 188–208 (MKGN…YPFI), 220–240 (YANL…LAFF), 270–290 (IIVS…LWGV), 300–320 (IKQK…SFFL), and 331–351 (TWTG…LWLI).

It belongs to the amino acid-polyamine-organocation (APC) superfamily. Spore germination protein (SGP) (TC 2.A.3.9) family.

It localises to the membrane. Its function is as follows. Required for the germination response to inosine. Has no role in L-alanine germination. The sequence is that of Spore germination protein GerQB (gerQB) from Bacillus cereus.